A 335-amino-acid polypeptide reads, in one-letter code: DNA-directed RNA polymerases I and III subunit RPAC1 (335 aa).

Serine 2 is subject to N-acetylserine. A Phosphoserine modification is found at serine 17.

This sequence belongs to the archaeal Rpo3/eukaryotic RPB3 RNA polymerase subunit family. In terms of assembly, component of the RNA polymerase I (Pol I) complex consisting of 14 subunits: RPA135, RPA190, RPC40, RPA14, RPB5, RPO26, RPA43, RPB8, RPA12, RPB10, RPC19, RPC10, RPA49 and RPA34. The complex is composed of a horseshoe-shaped core containing ten subunits (RPA135, RPA190, RPB5, RPO26, RPB8, RPB10, RPC10, RPA12, RPC19 and RPC40) where RPA135 and RPA190 form the DNA-binding cleft. Outside of the core, RPA14 and RPA43 form the stalk that mediates interactions with transcription initiation factors and newly synthesized RNA. Component of the RNA polymerase III (Pol III) complex consisting of at least 17 subunits. Interacts with the RPC19/RPAC2 and RPC53/RPC4. Interacts with retrotransposons Ty integrase, targeting Ty1, Ty2 and Ty4 integration upstream of pol III-transcribed genes.

The protein localises to the nucleus. It localises to the nucleolus. Its function is as follows. DNA-dependent RNA polymerases catalyze the transcription of DNA into RNA using the four ribonucleoside triphosphates as substrates. Common component of RNA polymerases I (Pol I) and III (Pol III) which synthesize ribosomal RNA precursors and small RNAs, such as 5S rRNA and tRNAs, respectively. RPC40 is part of the polymerase core and may function as a clamp element that moves to open and close the cleft. Plays an important role in targeting retrotransposons Ty integration upstream of pol III-transcribed genes such as tRNA genes, allowing Ty1, Ty2 and Ty4 to proliferate and yet minimizing genetic damage. This is DNA-directed RNA polymerases I and III subunit RPAC1 from Saccharomyces cerevisiae (strain ATCC 204508 / S288c) (Baker's yeast).